The chain runs to 198 residues: Recombination protein RecR (198 aa).

Residues 57-72 (CSVCGHITDRDPCYIC) form a C4-type zinc finger. Positions 80–175 (SVVCVVQEPK…KVTRIAHGLP (96 aa)) constitute a Toprim domain.

It belongs to the RecR family.

Its function is as follows. May play a role in DNA repair. It seems to be involved in an RecBC-independent recombinational process of DNA repair. It may act with RecF and RecO. This is Recombination protein RecR from Bacillus anthracis (strain A0248).